Consider the following 365-residue polypeptide: Putative clathrin assembly protein At4g40080 (365 aa).

Residues 29–167 (NTKSKTLSFH…STSRIMGFFI (139 aa)) enclose the ENTH domain.

The protein resides in the membrane. The protein localises to the clathrin-coated pit. It localises to the golgi apparatus. Its subcellular location is the cytoplasmic vesicle. It is found in the clathrin-coated vesicle. This Arabidopsis thaliana (Mouse-ear cress) protein is Putative clathrin assembly protein At4g40080.